The sequence spans 462 residues: MTCEVKEKGRVGTINPIFTCQPAGAQFVSIGIKDCIGIVHGGQGCVMFVRLIFSQHYKESFELASSSLHEDGAVFGACGRVEEAVDVLLSRYPDVKVVPIITTCSTEIIGDDVDGVIKKLNEGLLKEKFPDREVHLIAMHTPSFVGSMISGYDVAVRDVVRHFAKREAPNDKINLLTGWVNPGDVKELKHLLGEMDIEANVLFEIESFDSPILPDGSAVSHGNTTIEDLIDTGNARATFALNRYEGTKAAEYLQKKFEIPAIIGPTPIGIRNTDIFLQNLKKATGKPIPQSLAHERGVAIDALADLTHMFLAEKRVAIYGAPDLVIGLAEFCLDLEMKPVLLLLGDDNSKYVDDPRIKALQENVDYGMEIVTNADFWELENRIKNEGLELDLILGHSKGRFISIDYNIPMLRVGFPTYDRAGLFRYPTVGYGGAIWLAEQMANTLFADMEHKKNKEWVLNVW.

[8Fe-7S] cluster is bound by residues C20, C45, C104, and S143.

It belongs to the NifD/NifK/NifE/NifN family. As to quaternary structure, hexamer of two alpha, two beta, and two delta chains. Requires [8Fe-7S] cluster as cofactor.

The enzyme catalyses N2 + 8 reduced [2Fe-2S]-[ferredoxin] + 16 ATP + 16 H2O = H2 + 8 oxidized [2Fe-2S]-[ferredoxin] + 2 NH4(+) + 16 ADP + 16 phosphate + 6 H(+). Its function is as follows. This iron-iron protein is part of the nitrogenase complex that catalyzes the key enzymatic reactions in nitrogen fixation. Other nitrogenase complexes utilize a molybdenum-iron protein or a vanadium-iron protein. This Azotobacter vinelandii protein is Nitrogenase iron-iron protein beta chain (anfK).